A 263-amino-acid chain; its full sequence is Reductase pytE (263 aa).

Belongs to the avfA family.

The protein operates within secondary metabolite biosynthesis. Reductase; part of the gene cluster that mediates the biosynthesis of pyranterreones, a family of antioxidative compounds. The first step of pyranonigrins biosynthesis is performed by the hybrid PKS-NRPS synthetase pytA that condenses 4 malonyl-CoA units ato the acetyl starter unit by the modular PKS of pytA. The acyl chain is then connected to an L-serine through the amide bond by the modular NRPS of pytA. A tetramic acid is formed and released from the PKS-NRPS pytA to give pyranterreone 5 with the help of the thioesterase pytI. Pyranterreone 5 could be methylated by pytC to afford pyranterreone 6. Both pyranterreones 5 and 6 are subsequently oxidized by the FAD-linked oxidoreductase pytB and the cytochrome P450 monooxygenase pytD to form the fused gamma-pyrone core, resulting in pyranterreones 7 and 11, respectively. The hydroxy group at C-8 of pyranterreones 7 and 11 are dehydrated by the aspartyl protease pytH to form a delta-7 double bond to give pyranterreones 3 and 1, 2 accordingly. The exo-methylene of pyranterreone 3 could be reduced into a pendant methyl by reductase pytE to provide pyranterreone 4, also known as cordylactam. Pyranterreone 4 can be reconverted to pyranterreone 3 through pytB-catalyzed dehydrogenation or further oxidized to pyranterreones 9 and 10. The polypeptide is Reductase pytE (Aspergillus terreus).